A 264-amino-acid polypeptide reads, in one-letter code: Type II iodothyronine deiodinase (264 aa).

At 1–7 (MGLLSVD) the chain is on the lumenal side. The helical; Signal-anchor for type III membrane protein transmembrane segment at 8 to 28 (LLITLQILPGFFSNCLFLALY) threads the bilayer. At 29 to 264 (DSVVLVKHVL…AESGQTGTEK (236 aa)) the chain is on the cytoplasmic side. Residue U124 is part of the active site. U124 is a non-standard amino acid (selenocysteine).

It belongs to the iodothyronine deiodinase family. Predominantly monomer. Can form homodimers but homodimerization is not essential for enzyme activity. In terms of tissue distribution, high levels seen in the metamorphosing tail.

The protein resides in the endoplasmic reticulum membrane. The catalysed reaction is 3,3',5-triiodo-L-thyronine + iodide + A + H(+) = L-thyroxine + AH2. It catalyses the reaction 3,3'-diiodo-L-thyronine + iodide + A + H(+) = 3,3',5'-triiodo-L-thyronine + AH2. The enzyme catalyses 3'-iodo-L-thyronine + iodide + A + H(+) = 3',5'-diiodo-L-thyronine + AH2. It carries out the reaction 3,3'-diiodothyronamine + iodide + A + H(+) = 3,3',5'-triiodothyronamine + AH2. The catalysed reaction is 3'-iodothyronamine + iodide + A + H(+) = 3',5'-diiodothyronamine + AH2. Not inhibited by N(6)-propylthiouracil. Plays a crucial role in the metabolism of thyroid hormones (TH) and has specific roles in TH activation and inactivation by deiodination. Catalyzes the deiodination of L-thyroxine (T4) to 3,5,3'-triiodothyronine (T3) and 3',5'-diiodothyronine (3',5'-T2) to 3'-monoiodothyronine (3'-T1) via outer-ring deiodination (ORD). Catalyzes the deiodination of 3,3',5'-triiodothyronine (rT3) to 3,3'-diiodothyronine (3,3'-T2) via ORD. Catalyzes the phenolic ring deiodinations of 3,3',5'-triiodothyronamine and 3',5'- diiodothyronamine. The chain is Type II iodothyronine deiodinase (dio2) from Aquarana catesbeiana (American bullfrog).